Reading from the N-terminus, the 180-residue chain is Shikimate kinase (180 aa).

Residue 14 to 19 (GAGKST) participates in ATP binding. Ser18 lines the Mg(2+) pocket. Substrate-binding residues include Asp36, Arg60, and Gly82. Arg120 lines the ATP pocket. Substrate is bound at residue Arg140. Gln157 contributes to the ATP binding site.

It belongs to the shikimate kinase family. As to quaternary structure, monomer. Mg(2+) serves as cofactor.

Its subcellular location is the cytoplasm. The catalysed reaction is shikimate + ATP = 3-phosphoshikimate + ADP + H(+). The protein operates within metabolic intermediate biosynthesis; chorismate biosynthesis; chorismate from D-erythrose 4-phosphate and phosphoenolpyruvate: step 5/7. Catalyzes the specific phosphorylation of the 3-hydroxyl group of shikimic acid using ATP as a cosubstrate. The sequence is that of Shikimate kinase from Haemophilus influenzae (strain PittEE).